The following is a 549-amino-acid chain: MAKDILFDVRAREAILRGVNILADAVKVTLGPKGRNVVIEKSFGSPTITKDGVTVAKEIELENKFENMGAQMVKEVASKTSDVAGDGTTTATVLAQAIFREGAKLVAAGHNPMDIKRGIDKAVGAIVAELKKLAKPTKDKKEIAQVGTISANGDETIGTIIADAMEKVGKEGVITVEEAKGLETTLDVVEGMQFDRGYLSPYFVTDPERMEAALNDALILINEKKISSMKDLLPILEQVARAGKPLLIIAEDIEGEALATLVVNKIRGVLNVCAVKAPGFGDRRKAMLEDIATLTGGRMIAEDLGIKLDTITLQDLGRAKRITVDKDNTTIVDGAGGQQEIEARVKQIRAQIEETSSDYDREKLQERLAKLVGGVAVINVGAATETEMKEKKARVEDALNATRAAVEEGVVPGGGVAYIRCLKALDGLQLSGGEKFGVDIIRRAVEEPLRQIVGNGGLEGSVVVNKVKESSGPFGFNAATGTYEDLLAAGVIDPAKVSRTALQNAASVSSLMLTTEAMVAERPKEEKDLPAGGGMGGMGGMGGMGGMGM.

ATP-binding positions include 29 to 32, K50, 86 to 90, G414, 477 to 479, and D493; these read TLGP, DGTTT, and NAA.

Belongs to the chaperonin (HSP60) family. In terms of assembly, forms a cylinder of 14 subunits composed of two heptameric rings stacked back-to-back. Interacts with the co-chaperonin GroES.

The protein resides in the cytoplasm. The enzyme catalyses ATP + H2O + a folded polypeptide = ADP + phosphate + an unfolded polypeptide.. Together with its co-chaperonin GroES, plays an essential role in assisting protein folding. The GroEL-GroES system forms a nano-cage that allows encapsulation of the non-native substrate proteins and provides a physical environment optimized to promote and accelerate protein folding. The chain is Chaperonin GroEL 2 from Myxococcus xanthus (strain DK1622).